The primary structure comprises 500 residues: Probable malate:quinone oxidoreductase (500 aa).

It belongs to the MQO family. The cofactor is FAD.

The enzyme catalyses (S)-malate + a quinone = a quinol + oxaloacetate. Its pathway is carbohydrate metabolism; tricarboxylic acid cycle; oxaloacetate from (S)-malate (quinone route): step 1/1. This chain is Probable malate:quinone oxidoreductase, found in Bacillus cereus (strain ZK / E33L).